We begin with the raw amino-acid sequence, 82 residues long: uncharacterized protein (82 aa).

2 consecutive transmembrane segments (helical) span residues 32-52 (PFSI…IGIL) and 59-79 (SKPL…FNII).

The protein localises to the cell membrane. This is an uncharacterized protein from Rickettsia prowazekii (strain Madrid E).